The following is a 203-amino-acid chain: Acid phosphatase (203 aa).

The active-site Tele-phosphohistidine intermediate is H13. The active-site Proton donor/acceptor is the E85.

This sequence belongs to the phosphoglycerate mutase family. In terms of assembly, homodimer.

The catalysed reaction is a phosphate monoester + H2O = an alcohol + phosphate. It catalyses the reaction beta-D-fructose 1,6-bisphosphate + H2O = beta-D-fructose 6-phosphate + phosphate. It functions in the pathway carbohydrate biosynthesis; gluconeogenesis. In contrast to classical FBPases, is resistant to inhibition by lithium. Functionally, phosphatase with a broad specificity. Can dephosphorylate a variety of substrates including phosphorylated sugars like fructose-6-phosphate (F6P). Is able to function in vivo as a fructose-1,6-bisphosphatase (FBPase) and to maintain gluconeogenesis when the classical FBPase GlpX is absent. Shows negligible phosphoglycerate mutase activity. Has no phosphatase activity against 3-phosphoglycerate, 2,3-bisphosphoglycerate, or hydrophobic substrates such as alpha-napthyl phosphate. This Mycobacterium tuberculosis (strain ATCC 25618 / H37Rv) protein is Acid phosphatase.